A 361-amino-acid polypeptide reads, in one-letter code: Phospho-N-acetylmuramoyl-pentapeptide-transferase (361 aa).

Transmembrane regions (helical) follow at residues 25-45 (TGGA…WIID), 72-92 (TPTM…LLWA), 95-115 (LNPY…VGFY), 135-155 (LLIE…LGRA), 169-189 (VMLN…VGAG), 200-220 (GLAI…SYLA), 240-260 (LAVL…FNAP), 264-284 (IFMG…IAVA), 289-309 (IVLA…IVQV), and 338-358 (QIVI…LSTL).

The protein belongs to the glycosyltransferase 4 family. MraY subfamily. Mg(2+) serves as cofactor.

Its subcellular location is the cell inner membrane. It catalyses the reaction UDP-N-acetyl-alpha-D-muramoyl-L-alanyl-gamma-D-glutamyl-meso-2,6-diaminopimeloyl-D-alanyl-D-alanine + di-trans,octa-cis-undecaprenyl phosphate = di-trans,octa-cis-undecaprenyl diphospho-N-acetyl-alpha-D-muramoyl-L-alanyl-D-glutamyl-meso-2,6-diaminopimeloyl-D-alanyl-D-alanine + UMP. It functions in the pathway cell wall biogenesis; peptidoglycan biosynthesis. In terms of biological role, catalyzes the initial step of the lipid cycle reactions in the biosynthesis of the cell wall peptidoglycan: transfers peptidoglycan precursor phospho-MurNAc-pentapeptide from UDP-MurNAc-pentapeptide onto the lipid carrier undecaprenyl phosphate, yielding undecaprenyl-pyrophosphoryl-MurNAc-pentapeptide, known as lipid I. The protein is Phospho-N-acetylmuramoyl-pentapeptide-transferase of Rhodopseudomonas palustris (strain ATCC BAA-98 / CGA009).